Reading from the N-terminus, the 598-residue chain is MNNIRNFAIIAHIDHGKSTLADRLIEECNGLEAREMINQILDSMDIERERGITIKAQTVKLNYTANDGNQYCLNLMDTPGHVDFSYEVSRSLAACEGSLLVVDSSQGVEAQTLANVYKAIDNNHEIIVVLNKVDLPAADPEKVKLQVEEVIGIDASESVLISAKTGLGIKDVLEAIVAKLPAPQGDVNAPLQAILVDSWYDTYLGVVILVRVKNGVLKKGMKIVMMSNNATYQIDNIGIFTPKKVMTGELSAGEVGFITASMKEVADCKVGDTITEEKRPCSEALPGFKEVHPVVFCSIFPHKTDDFKYLREALEKLHLNDASFTFEAETSNALGYGFRCGFLGMLHLEVIQERLEREFDLDLTATAPSVIYRVTTRSGEILNIHNPSDMPDPTKIEIVEEPWITATIMVPDQYLGEILSLCEERRGEQEDLSYIGNTTTALLRYKLPLSEVVFDFYDRLKSISKGYASLDWEISSYLVSQIDKLSFLINGEPVDALACIVHKSRAEKRGREICARLKDLIPRQQYKIAIQAAVGGKIIARETINPYRKDVTAKLYGGDVTRRMKLLEKQKKGKKRLHSIGNVNIPQNAFIQALKISD.

Positions Asn-2–Gln-184 constitute a tr-type G domain. Residues Asp-14 to Thr-19 and Asn-131 to Asp-134 each bind GTP.

It belongs to the TRAFAC class translation factor GTPase superfamily. Classic translation factor GTPase family. LepA subfamily.

It is found in the cell membrane. The enzyme catalyses GTP + H2O = GDP + phosphate + H(+). Its function is as follows. Required for accurate and efficient protein synthesis under certain stress conditions. May act as a fidelity factor of the translation reaction, by catalyzing a one-codon backward translocation of tRNAs on improperly translocated ribosomes. Back-translocation proceeds from a post-translocation (POST) complex to a pre-translocation (PRE) complex, thus giving elongation factor G a second chance to translocate the tRNAs correctly. Binds to ribosomes in a GTP-dependent manner. The polypeptide is Elongation factor 4 (Wolbachia sp. subsp. Drosophila simulans (strain wRi)).